A 271-amino-acid polypeptide reads, in one-letter code: Ubiquitin thioesterase OTUB1 (271 aa).

At Ala-2 the chain carries N-acetylalanine. Residue Ser-16 is modified to Phosphoserine. Tyr-26 is modified (phosphotyrosine). The region spanning 80-271 is the OTU domain; sequence SYIRKTRPDG…RPGHYDILYK (192 aa). Asp-88 is an active-site residue. Catalysis depends on Cys-91, which acts as the Nucleophile. 2 ubiquitin-conjugating enzyme E2 binding regions span residues 130-138 and 169-177; these read FTEFTIEDF and DYLVVYLRL. The segment at 189–195 is free ubiquitin binding; sequence FFEHFIE. A ubiquitin-conjugating enzyme E2 binding region spans residues 206-213; the sequence is QEVEPMCK. Free ubiquitin binding regions lie at residues 214–221 and 245–251; these read ESDHIHII and NPHVFPE. His-265 is an active-site residue.

This sequence belongs to the peptidase C65 family. Interacts with RNF128. Forms a ternary complex with RNF128 and USP8. Interacts with FUS and RACK1. Interacts with UBE2D1/UBCH5A, UBE2W/UBC16 and UBE2N/UBC13. Post-translationally, phosphorylation at Tyr-26 by SRC and SRMS promotes deubiquitination of RPTOR via a non-catalytic process.

It is found in the cytoplasm. It catalyses the reaction Thiol-dependent hydrolysis of ester, thioester, amide, peptide and isopeptide bonds formed by the C-terminal Gly of ubiquitin (a 76-residue protein attached to proteins as an intracellular targeting signal).. With respect to regulation, by free ubiquitin: binding of free ubiquitin triggers conformational changes in the OTU domain and formation of a ubiquitin-binding helix in the N-terminus, promoting binding of the conjugated donor ubiquitin in UBE2N/UBC13 to OTUB1. Hydrolase that can specifically remove compared to 'Lys-48'-linked conjugated ubiquitin from proteins and plays an important regulatory role at the level of protein turnover by preventing degradation. Regulator of T-cell anergy, a phenomenon that occurs when T-cells are rendered unresponsive to antigen rechallenge and no longer respond to their cognate antigen. Acts via its interaction with RNF128/GRAIL. Surprisingly, it regulates RNF128-mediated ubiquitination, but does not deubiquitinate polyubiquitinated RNF128. Deubiquitinates estrogen receptor alpha (ESR1). Mediates deubiquitination of 'Lys-48'-linked polyubiquitin chains, but not 'Lys-63'-linked polyubiquitin chains. Not able to cleave di-ubiquitin. Also capable of removing NEDD8 from NEDD8 conjugates, but with a much lower preference compared to 'Lys-48'-linked ubiquitin. Functionally, plays a key non-catalytic role in DNA repair regulation by inhibiting activity of RNF168, an E3 ubiquitin-protein ligase that promotes accumulation of 'Lys-63'-linked histone H2A and H2AX at DNA damage sites. Inhibits RNF168 independently of ubiquitin thioesterase activity by binding and inhibiting UBE2N/UBC13, the E2 partner of RNF168, thereby limiting spreading of 'Lys-63'-linked histone H2A and H2AX marks. Inhibition occurs by binding to free ubiquitin: free ubiquitin acts as an allosteric regulator that increases affinity for UBE2N/UBC13 and disrupts interaction with UBE2V1. The OTUB1-UBE2N/UBC13-free ubiquitin complex adopts a configuration that mimics a cleaved 'Lys48'-linked di-ubiquitin chain. Acts as a regulator of mTORC1 and mTORC2 complexes. When phosphorylated at Tyr-26, acts as an activator of the mTORC1 complex by mediating deubiquitination of RPTOR via a non-catalytic process: acts by binding and inhibiting the activity of the ubiquitin-conjugating enzyme E2 (UBE2D1/UBCH5A, UBE2W/UBC16 and UBE2N/UBC13), thereby preventing ubiquitination of RPTOR. Can also act as an inhibitor of the mTORC1 and mTORC2 complexes in response to amino acids by mediating non-catalytic deubiquitination of DEPTOR. This chain is Ubiquitin thioesterase OTUB1 (Otub1), found in Mus musculus (Mouse).